Consider the following 690-residue polypeptide: Probable serine/threonine-protein kinase drkB (690 aa).

The first 24 residues, 1–24 (MKVQIVFFSITVFIFVLFLLSVES), serve as a signal peptide directing secretion. The interval 51 to 110 (DSKSSEHTTSSSSSSNSKNKGDSSSSSSNSGSSSNSIISGDSNSKDAPTTSSDSLSPATP) is disordered. Low complexity predominate over residues 57-96 (HTTSSSSSSNSKNKGDSSSSSSNSGSSSNSIISGDSNSKD). Residues 97–107 (APTTSSDSLSP) are compositionally biased toward polar residues. Residues Asn-134, Asn-180, Asn-220, and Asn-250 are each glycosylated (N-linked (GlcNAc...) asparagine). Residues 287–335 (TITPTPTITPTPTITPTVTPTATPSTTPSTTPTTTPSTPTPTPTKSPYS) form a disordered region. The span at 296 to 323 (PTPTITPTVTPTATPSTTPSTTPTTTPS) shows a compositional bias: low complexity. Residues 346-366 (IIIASSITGGLLISIFSFVFI) form a helical membrane-spanning segment. Residues 391-644 (IKIGVRIGKG…EQCLEILESI (254 aa)) enclose the Protein kinase domain. ATP-binding positions include 397–405 (IGKGNFGEV) and Lys-418. The active-site Proton acceptor is Asp-514. Positions 649–690 (FDDIPVNNNNNNNSNNNENNNENNNNSDNNNNDINYSNRVIN) are disordered. The segment covering 655 to 681 (NNNNNNNSNNNENNNENNNNSDNNNND) has biased composition (low complexity).

Belongs to the protein kinase superfamily. TKL Ser/Thr protein kinase family.

The protein localises to the membrane. The enzyme catalyses L-seryl-[protein] + ATP = O-phospho-L-seryl-[protein] + ADP + H(+). It carries out the reaction L-threonyl-[protein] + ATP = O-phospho-L-threonyl-[protein] + ADP + H(+). The chain is Probable serine/threonine-protein kinase drkB (drkB) from Dictyostelium discoideum (Social amoeba).